The chain runs to 269 residues: Eukaryotic translation initiation factor 3 subunit G-1 (269 aa).

In terms of domain architecture, RRM spans 188-266 (AAIRISNLSE…LILSVEWSKP (79 aa)).

This sequence belongs to the eIF-3 subunit G family. In terms of assembly, component of the eukaryotic translation initiation factor 3 (eIF-3) complex. The eIF-3 complex interacts with pix.

It is found in the cytoplasm. Its function is as follows. RNA-binding component of the eukaryotic translation initiation factor 3 (eIF-3) complex, which is involved in protein synthesis of a specialized repertoire of mRNAs and, together with other initiation factors, stimulates binding of mRNA and methionyl-tRNAi to the 40S ribosome. The eIF-3 complex specifically targets and initiates translation of a subset of mRNAs involved in cell proliferation. This subunit can bind 18S rRNA. The sequence is that of Eukaryotic translation initiation factor 3 subunit G-1 from Drosophila sechellia (Fruit fly).